The chain runs to 364 residues: Succinyl-diaminopimelate desuccinylase (364 aa).

H64 is a Zn(2+) binding site. The active site involves D66. A Zn(2+)-binding site is contributed by D95. E125 acts as the Proton acceptor in catalysis. E126, E154, and H339 together coordinate Zn(2+).

It belongs to the peptidase M20A family. DapE subfamily. In terms of assembly, homodimer. It depends on Zn(2+) as a cofactor. Co(2+) serves as cofactor.

It carries out the reaction N-succinyl-(2S,6S)-2,6-diaminopimelate + H2O = (2S,6S)-2,6-diaminopimelate + succinate. Its pathway is amino-acid biosynthesis; L-lysine biosynthesis via DAP pathway; LL-2,6-diaminopimelate from (S)-tetrahydrodipicolinate (succinylase route): step 3/3. In terms of biological role, catalyzes the hydrolysis of N-succinyl-L,L-diaminopimelic acid (SDAP), forming succinate and LL-2,6-diaminopimelate (DAP), an intermediate involved in the bacterial biosynthesis of lysine and meso-diaminopimelic acid, an essential component of bacterial cell walls. This Nitratiruptor sp. (strain SB155-2) protein is Succinyl-diaminopimelate desuccinylase.